The following is a 975-amino-acid chain: Protein spalten (975 aa).

Disordered regions lie at residues 1-31 (MKKM…QLAQ) and 64-99 (NLAQ…SNNN). The segment covering 8–17 (NKKEKKEEQS) has biased composition (basic and acidic residues). Positions 21–70 (SSLAQQHQLAQQQYQLQQQQLQLQYQQHQQQLQLAQQQKQNEQNLAQLST) form a coiled coil. In terms of domain architecture, G-alpha spans 114–458 (FCGTIMILGH…DAEKRGFTTP (345 aa)). Residues 117-130 (TIMILGHTESGKTT) are G1 motif. Residues 122–129 (GHTESGKT), 261–267 (ISAYDQK), 286–290 (GCSGK), and 373–376 (NTSD) contribute to the GTP site. The G2 motif stretch occupies residues 259-267 (DIISAYDQK). Residues 282–291 (VDLFGCSGKQ) are G3 motif. A G4 motif region spans residues 369 to 376 (YLIFNTSD). The interval 427–432 (VNLLDK) is G5 motif. Disordered regions lie at residues 455–520 (FTTP…GSST) and 541–700 (DNDS…VGSK). Composition is skewed to low complexity over residues 460–478 (NQSN…SRNS), 500–515 (LKNV…NTTT), and 544–587 (SSYS…NNAT). Residues 595 to 688 (PPKEPKPVKP…DGAAESKKNG (94 aa)) are compositionally biased toward basic and acidic residues. Residues 704-972 (ESGFGSLQGR…DNITVLVVIL (269 aa)) enclose the PPM-type phosphatase domain. Residues D749, G750, D920, and D963 each contribute to the Mn(2+) site.

In the N-terminal section; belongs to the G-alpha family. The protein in the C-terminal section; belongs to the PP2C family. G proteins are composed of 3 units; alpha, beta and gamma. The alpha chain contains the guanine nucleotide binding site. Requires Mg(2+) as cofactor. It depends on Mn(2+) as a cofactor.

It is found in the cytoplasm. Its subcellular location is the cytosol. The protein resides in the cell membrane. It catalyses the reaction O-phospho-L-seryl-[protein] + H2O = L-seryl-[protein] + phosphate. The catalysed reaction is O-phospho-L-threonyl-[protein] + H2O = L-threonyl-[protein] + phosphate. Inhibited by 50 mM NaF (sodium fluoride). In terms of biological role, involved in cell-type differentiation and morphogenesis. Dephosphorylates casein; in vitro. May also be involved as modulators or transducers in various transmembrane signaling systems. This chain is Protein spalten (spnA), found in Dictyostelium discoideum (Social amoeba).